The following is a 569-amino-acid chain: Glucose-6-phosphate isomerase, cytosolic 1A (569 aa).

Glu-360 serves as the catalytic Proton donor. Catalysis depends on residues His-391 and Lys-516.

This sequence belongs to the GPI family. Homodimer.

The protein localises to the cytoplasm. It carries out the reaction alpha-D-glucose 6-phosphate = beta-D-fructose 6-phosphate. Its pathway is carbohydrate degradation; glycolysis; D-glyceraldehyde 3-phosphate and glycerone phosphate from D-glucose: step 2/4. This is Glucose-6-phosphate isomerase, cytosolic 1A (PGIC1-A) from Clarkia lewisii (Farewell-to-spring).